Consider the following 524-residue polypeptide: MGENSTTGLRGQADVSQFSDAAVEPTLSSPPTGQRQQSLPLFGEETCSISSAPSVGGGGGWPFQRQGSSRLTSRGTSLSSCSDAGSGLGALRQREDSFPEYHGVGLPLGGKYALDGTGLVLAPRVPFIFSHQLPSLTGLDEAGFSDTRKVPSTYQALAARFVHQVHQEAGNGMYPLWSAGVVLRLCLLGALFFVSVGAWLIFEDEQHVECKLNYAEKTLQEGSSRYLLKGISSAHCTREVNELKGEEISVYAEMGHFFQNDAQVLWSRNDRQLAGKIFTDPKDVRECEPLATAVVGNVTKVLHPCGALAWAVFTDKYQFLEGTPEGDNDQVPMKPIPLNQTQAVLLHSWPWQDMYKNPPAEDRAAVLDKVYFWMSPVDNDDGEDMYKTREEARAELLMDRLNYEEAGEMVENGHFIQWMQTAALGTFRKLYGSLEGPLKLPVSAHITVMYDVSSWKGKKAIVLVQKSRLGGRSLFIGIAYLSFGCLLTMLVFYMLWKKWQYRREGEEIRDLRWQTKTRGSKKTK.

Polar residues-rich tracts occupy residues 1 to 19 (MGEN…SQFS) and 26 to 39 (TLSS…QQSL). Disordered stretches follow at residues 1–40 (MGEN…QSLP) and 52–86 (APSV…DAGS). The Cytoplasmic segment spans residues 1-181 (MGENSTTGLR…GMYPLWSAGV (181 aa)). Over residues 67-80 (GSSRLTSRGTSLSS) the composition is skewed to low complexity. The helical transmembrane segment at 182-202 (VLRLCLLGALFFVSVGAWLIF) threads the bilayer. Residues 203–473 (EDEQHVECKL…VQKSRLGGRS (271 aa)) lie on the Extracellular side of the membrane. N-linked (GlcNAc...) asparagine glycans are attached at residues N297 and N339. A helical transmembrane segment spans residues 474–494 (LFIGIAYLSFGCLLTMLVFYM). Over 495–524 (LWKKWQYRREGEEIRDLRWQTKTRGSKKTK) the chain is Cytoplasmic.

Belongs to the CDC50/LEM3 family. Interacts with GC; the interaction regulates guanylate cyclase GC trafficking and sensing environmental changes.

The protein resides in the membrane. Its function is as follows. In tachyzoites, required for the cellular trafficking of guanylate cyclase GC and UGO to the cell membrane. May play a role in the folding of the GC P-type ATPase-like domain to sense vacuolar changes in phosphatidic acid and pH levels which trigger parasite egress. The sequence is that of CDC50-related protein CDC50.1 from Toxoplasma gondii (strain ATCC 50853 / GT1).